An 85-amino-acid polypeptide reads, in one-letter code: Small ribosomal subunit protein bS16 (85 aa).

The protein belongs to the bacterial ribosomal protein bS16 family.

This Buchnera aphidicola subsp. Schizaphis graminum (strain Sg) protein is Small ribosomal subunit protein bS16.